A 609-amino-acid chain; its full sequence is Membrane protein insertase YidC (609 aa).

The helical transmembrane segment at 9–29 (IIAIVLSGLILIAWQYFYNIP) threads the bilayer. The segment at 35–63 (RAAQQAQSQTAKSPTEPTPNSPKPDHPAA) is disordered. Transmembrane regions (helical) follow at residues 375–395 (VFGN…AIFF), 449–469 (LPMV…FVTI), 507–527 (LLGP…TMWF), and 546–566 (WMPV…VIYW).

Belongs to the OXA1/ALB3/YidC family. Type 1 subfamily. Interacts with the Sec translocase complex via SecD. Specifically interacts with transmembrane segments of nascent integral membrane proteins during membrane integration.

Its subcellular location is the cell inner membrane. Functionally, required for the insertion and/or proper folding and/or complex formation of integral membrane proteins into the membrane. Involved in integration of membrane proteins that insert both dependently and independently of the Sec translocase complex, as well as at least some lipoproteins. Aids folding of multispanning membrane proteins. The protein is Membrane protein insertase YidC of Nitrobacter hamburgensis (strain DSM 10229 / NCIMB 13809 / X14).